A 428-amino-acid polypeptide reads, in one-letter code: MSAIVDIVGREVLDSRGNPTVECDVLLESGVMGRAAVPSGASTGSREAIEMRDGDPRRYQGKGVLKAVEHVNTEISEAVLGLDASEQAFLDKTLIDLDGTENKSRLGANAMLAVSMAVARAAAEESGLPLYRYLGGMGSVQLPVPMMNVINGGAHANNSLDLQEFMIIPVGAPNFREALRWGAEVFHALKKIIHDLGMSTAVGDEGGFAPSVENHEAAIRLILQAITAAGYSAGEQIALGLDCAASEFYQDGLYVLHGEGGLKLSAPQWIDMLAAWVDKYPIISIEDGMHEGDQDGWKQLSERLRDKVQLVGDDLFVTNTRLLQQGIDQRIANSILIKINQIGTLTETFAAIEMAKRAGYTAVISHRSGETEDCTIADIAVGTNAGQIKTGSLSRSDRIAKYNQLLRIEEDLGEVAQYPGRAAFRHLR.

A (2R)-2-phosphoglycerate-binding site is contributed by Gln163. Glu205 acts as the Proton donor in catalysis. 3 residues coordinate Mg(2+): Asp242, Glu286, and Asp313. Residues Lys338, Arg367, Ser368, and Lys389 each coordinate (2R)-2-phosphoglycerate. The active-site Proton acceptor is the Lys338.

The protein belongs to the enolase family. Mg(2+) serves as cofactor.

It is found in the cytoplasm. The protein resides in the secreted. It localises to the cell surface. The catalysed reaction is (2R)-2-phosphoglycerate = phosphoenolpyruvate + H2O. Its pathway is carbohydrate degradation; glycolysis; pyruvate from D-glyceraldehyde 3-phosphate: step 4/5. Functionally, catalyzes the reversible conversion of 2-phosphoglycerate (2-PG) into phosphoenolpyruvate (PEP). It is essential for the degradation of carbohydrates via glycolysis. This Verminephrobacter eiseniae (strain EF01-2) protein is Enolase.